The chain runs to 1121 residues: Brassinosteroid LRR receptor kinase BRI1 (1121 aa).

The N-terminal stretch at 1–24 is a signal peptide; sequence MDSLWAAIAALFVAAAVVVRGAAA. The Cys pair 1 motif lies at 54–61; it reads CRFPGAGC. LRR repeat units lie at residues 90–114, 116–142, 144–167, 170–193, 197–221, 223–243, 244–268, 269–292, 294–317, 318–341, 343–367, 369–391, 392–415, 416–439, 441–463, 464–487, and 489–511; these read LGSV…GGAR, GSKL…ALAS, CGGL…GGGG, FAGL…RWMV, VGAV…NCSG, QYLD…ALSD, CRGL…IAGL, TSLN…AFAK, QQLT…VASL, PELQ…LCQD, NSKL…VSNC, SLVS…LGDL, GNLQ…LSRI, QGLE…LAKC, KLNW…LGKL, SYLA…LGDC, and SLVW…LAKQ. Asparagine 102 carries N-linked (GlcNAc...) asparagine glycosylation. A glycan (N-linked (GlcNAc...) asparagine) is linked at asparagine 151. Asparagine 218 is a glycosylation site (N-linked (GlcNAc...) asparagine). Residues asparagine 251, asparagine 275, asparagine 280, and asparagine 307 are each glycosylated (N-linked (GlcNAc...) asparagine). N-linked (GlcNAc...) asparagine glycans are attached at residues asparagine 366 and asparagine 381. N-linked (GlcNAc...) asparagine glycosylation is found at asparagine 473 and asparagine 501. Residue tyrosine 525 coordinates brassinolide. The LRR 18 repeat unit spans residues 541 to 564; the sequence is GSLLEFTSIRPDDLSRMPSKKLCN. An N-linked (GlcNAc...) asparagine glycan is attached at asparagine 564. Position 569 (tyrosine 569) interacts with brassinolide. Residue asparagine 580 is glycosylated (N-linked (GlcNAc...) asparagine). LRR repeat units follow at residues 580–603, 604–628, 629–651, and 652–676; these read NGSM…ELGD, MFYL…LAEA, KKLA…SFSA, and LSLS…SLAT. N-linked (GlcNAc...) asparagine glycans are attached at residues asparagine 658, asparagine 665, and asparagine 684. The Cys pair 2 motif lies at 689 to 696; it reads CGFPLPPC. The tract at residues 693-712 is disordered; sequence LPPCDHSSPRSSNDHQSHRR. Residues 719-739 traverse the membrane as a helical segment; sequence SIAMGLLFSLFCIIVIIIAIG. The region spanning 807–1083 is the Protein kinase domain; sequence FHIACQIGSG…LKVMAMFKEI (277 aa). ATP is bound by residues 813-821, lysine 835, 881-883, 887-890, 933-938, and aspartate 951; these read IGSGGFGDV, DYM, SLED, and DMKSSN. The active-site Proton acceptor is the aspartate 933.

It belongs to the protein kinase superfamily. Ser/Thr protein kinase family. In terms of assembly, interacts with BIP103 and BIP131. Interacts with BAK1. Interacts with BSK3. Interacts with SERK2. In terms of tissue distribution, highly expressed in shoots. Expressed at low levels in roots.

The protein resides in the cell membrane. It carries out the reaction L-seryl-[protein] + ATP = O-phospho-L-seryl-[protein] + ADP + H(+). The enzyme catalyses L-threonyl-[protein] + ATP = O-phospho-L-threonyl-[protein] + ADP + H(+). Functionally, receptor kinase involved brassinosteroid (BR) signal transduction. Regulates, in response to BR binding, a signaling cascade involved in plant development, promotion of cell elongation and flowering. Activates BR signaling by targeting and phosphorylating BSK3, a positive regulator of BR signaling. Forms at the plasma membrane a receptor complex with BAK1 which is activated in response to brassinolide. Phosphorylates BAK1. Phosphorylates REM4.1, which reduces REM4.1 binding affinity to BAK1 and allows the formation and subsequent activation of the BRI1-BAK1 receptor complex. Functions in various growth and developmental processes, such as internode elongation, bending of the lamina joint and skotomorphogenesis. Functions in internode elongation by inducing the formation of the intercalary meristem and the longitudinal elongation of internode cells. Involved in organ development through the control of cell division and elongation. Does not seem essential for organ pattern formation or organ initiation. This Oryza sativa subsp. japonica (Rice) protein is Brassinosteroid LRR receptor kinase BRI1.